Here is a 932-residue protein sequence, read N- to C-terminus: UPF0182 protein Dred_1797 (932 aa).

Transmembrane regions (helical) follow at residues 11-31, 53-73, 118-138, 180-200, 209-229, 264-284, and 292-312; these read LVIL…GLYI, IGLR…NLML, LTLA…SSVA, ILAS…LVTD, IFRF…FFVI, YKAL…NIFL, and YAIG…PAII. The disordered stretch occupies residues 861 to 883; sequence DRPQQGVPPATDQPAGQQPAPEK.

Belongs to the UPF0182 family.

Its subcellular location is the cell membrane. The sequence is that of UPF0182 protein Dred_1797 from Desulforamulus reducens (strain ATCC BAA-1160 / DSM 100696 / MI-1) (Desulfotomaculum reducens).